Consider the following 180-residue polypeptide: ATP-dependent protease subunit HslV (180 aa).

The active site involves T7. Positions 165, 168, and 171 each coordinate Na(+).

Belongs to the peptidase T1B family. HslV subfamily. As to quaternary structure, a double ring-shaped homohexamer of HslV is capped on each side by a ring-shaped HslU homohexamer. The assembly of the HslU/HslV complex is dependent on binding of ATP.

The protein localises to the cytoplasm. It carries out the reaction ATP-dependent cleavage of peptide bonds with broad specificity.. With respect to regulation, allosterically activated by HslU binding. Functionally, protease subunit of a proteasome-like degradation complex believed to be a general protein degrading machinery. The sequence is that of ATP-dependent protease subunit HslV from Bacillus cereus (strain G9842).